The sequence spans 362 residues: MHYCERTLDPKYILKIALKLRQSLSLFFQNSQSLQRAYSTPYSYYRIILQKENKEKQALARHKCISILEFFKNLLFVHLLSLSKNQREGCSTDMAVVSTPFFNRNLWYRLLSSRFSLWKSYCPRFFLDYLEAFGLLSDFLDHQAVIKFFELETHFSYYPVSGFVAPHQYLSLLQDRYFPIASVMRTLDKDNFSLTPDLIHDLLGHVPWLLHPSFSEFFINMGRLFTKVIEKVQALPSKKQRIQTLQSNLIAIVRCFWFTVESGLIENHEGRKAYGAVLISSPQELGHAFIDNVRVLPLELDQIIRLPFNTSTPQETLFSIRHFDELVELTSKLEWMLDQGLLESIPLYNQEKYLSGFEVLCQ.

Residues histidine 200 and histidine 205 each contribute to the Fe cation site.

The protein belongs to the biopterin-dependent aromatic amino acid hydroxylase family. Fe(2+) is required as a cofactor.

In Chlamydia pneumoniae (Chlamydophila pneumoniae), this protein is Probable aromatic amino acid hydroxylase.